The following is a 244-amino-acid chain: Transcriptional activator protein anr (244 aa).

Residue 21–149 coordinates a nucleoside 3',5'-cyclic phosphate; sequence APLCLPLSLT…RLMSREIRDD (129 aa). The 74-residue stretch at 159 to 232 folds into the HTH crp-type domain; the sequence is KTADERIATF…GKEVHILDSI (74 aa). The H-T-H motif DNA-binding region spans 192–211; it reads RNEIGNYLGLAVETVSRVFT.

Functionally, transcriptional activator of anaerobic gene expression. This Pseudomonas aeruginosa (strain ATCC 15692 / DSM 22644 / CIP 104116 / JCM 14847 / LMG 12228 / 1C / PRS 101 / PAO1) protein is Transcriptional activator protein anr (anr).